The following is a 631-amino-acid chain: Coiled-coil domain-containing protein 93 (631 aa).

Disordered stretches follow at residues methionine 1 to glutamine 23 and glutamine 214 to aspartate 243. A sufficient for interaction with CCDC22 region spans residues methionine 1 to aspartate 430. Positions serine 215–threonine 225 are enriched in basic and acidic residues. Phosphoserine occurs at positions 298, 301, and 305. Residues leucine 309–serine 631 adopt a coiled-coil conformation. Residues leucine 421–threonine 433 are compositionally biased toward basic and acidic residues. Positions leucine 421–methionine 447 are disordered. The tract at residues threonine 448–serine 631 is sufficient for interaction with WASHC2C.

This sequence belongs to the CCDC93 family. As to quaternary structure, component of the commander complex consisting of the CCC subcomplex and the retriever subcomplex. Component of the CCC (COMMD/CCDC22/CCDC93) subcomplex consisting of COMMD1, COMMD2, COMMD3, COMMD4, COMMD5, COMMD6, COMMD7, COMMD8, COMMD9, COMMD10, CCDC22 and CCDC93. Forms a coiled-coil heterodimer with CCDC22; this heterodimer interacts with the guanine nucleotide exchange factor DENND10; the interaction is direct. Interacts with WASHC1. Interacts directly with WASHC2C. Interacts with SNX17 and SNX31.

Its subcellular location is the early endosome. Component of the commander complex that is essential for endosomal recycling of transmembrane cargos; the commander complex is composed of composed of the CCC subcomplex and the retriever subcomplex. Component of the CCC complex, which is involved in the regulation of endosomal recycling of surface proteins, including integrins, signaling receptor and channels. The CCC complex associates with SNX17, retriever and WASH complexes to prevent lysosomal degradation and promote cell surface recycling of numerous cargos such as integrins ITGA5:ITGB1. Involved in copper-dependent ATP7A trafficking between the trans-Golgi network and vesicles in the cell periphery; the function is proposed to depend on its association within the CCC complex and cooperation with the WASH complex on early endosomes and is dependent on its interaction with WASHC2C. Its function is as follows. (Microbial infection) The CCC complex, in collaboration with the heterotrimeric retriever complex, mediates the exit of human papillomavirus to the cell surface. The chain is Coiled-coil domain-containing protein 93 (CCDC93) from Homo sapiens (Human).